Here is a 197-residue protein sequence, read N- to C-terminus: Imidazoleglycerol-phosphate dehydratase (197 aa).

The protein belongs to the imidazoleglycerol-phosphate dehydratase family.

The protein localises to the cytoplasm. The enzyme catalyses D-erythro-1-(imidazol-4-yl)glycerol 3-phosphate = 3-(imidazol-4-yl)-2-oxopropyl phosphate + H2O. The protein operates within amino-acid biosynthesis; L-histidine biosynthesis; L-histidine from 5-phospho-alpha-D-ribose 1-diphosphate: step 6/9. This chain is Imidazoleglycerol-phosphate dehydratase, found in Hahella chejuensis (strain KCTC 2396).